Reading from the N-terminus, the 450-residue chain is L-galactonate dehydratase (450 aa).

K221 is a catalytic residue. Mg(2+) contacts are provided by D251, E277, and E306. H356 is an active-site residue.

It belongs to the mandelate racemase/muconate lactonizing enzyme family. Mg(2+) serves as cofactor.

The enzyme catalyses L-galactonate = 2-dehydro-3-deoxy-L-galactonate + H2O. It participates in carbohydrate acid metabolism. Its function is as follows. Mediates the conversion of L-galactonate to 2-dehydro-3-deoxy-L-galactonate, the second step in D-galacturonate catabolic process. This chain is L-galactonate dehydratase (lgd1), found in Hypocrea jecorina (Trichoderma reesei).